Consider the following 70-residue polypeptide: uncharacterized protein (70 aa).

This is an uncharacterized protein from Methanocaldococcus jannaschii (strain ATCC 43067 / DSM 2661 / JAL-1 / JCM 10045 / NBRC 100440) (Methanococcus jannaschii).